The primary structure comprises 260 residues: Adenosylcobinamide-GDP ribazoletransferase (260 aa).

Transmembrane regions (helical) follow at residues 40–60 (AFPF…LLLL), 64–84 (ADPL…TGAL), 117–137 (YGAI…AAIV), 142–162 (PLAA…AITW), 189–209 (FALV…FGLW), and 210–230 (PLVA…VFIR).

The protein belongs to the CobS family. Requires Mg(2+) as cofactor.

It is found in the cell inner membrane. The catalysed reaction is alpha-ribazole + adenosylcob(III)inamide-GDP = adenosylcob(III)alamin + GMP + H(+). It catalyses the reaction alpha-ribazole 5'-phosphate + adenosylcob(III)inamide-GDP = adenosylcob(III)alamin 5'-phosphate + GMP + H(+). The protein operates within cofactor biosynthesis; adenosylcobalamin biosynthesis; adenosylcobalamin from cob(II)yrinate a,c-diamide: step 7/7. In terms of biological role, joins adenosylcobinamide-GDP and alpha-ribazole to generate adenosylcobalamin (Ado-cobalamin). Also synthesizes adenosylcobalamin 5'-phosphate from adenosylcobinamide-GDP and alpha-ribazole 5'-phosphate. This is Adenosylcobinamide-GDP ribazoletransferase from Rhizobium etli (strain CIAT 652).